The chain runs to 222 residues: Peroxiredoxin (222 aa).

The region spanning 7–163 (PRLGEPAPAF…VIRLVDALQT (157 aa)) is the Thioredoxin domain. The active-site Cysteine sulfenic acid (-SOH) intermediate is Cys49. Arg126 lines the substrate pocket. Cysteines 212 and 218 form a disulfide.

It belongs to the peroxiredoxin family. Prx6 subfamily. As to quaternary structure, homodecamer. Pentamer of dimers that assemble into a ring structure.

The protein localises to the cytoplasm. The enzyme catalyses a hydroperoxide + [thioredoxin]-dithiol = an alcohol + [thioredoxin]-disulfide + H2O. Functionally, thiol-specific peroxidase that catalyzes the reduction of hydrogen peroxide and organic hydroperoxides to water and alcohols, respectively. Plays a role in cell protection against oxidative stress by detoxifying peroxides. The protein is Peroxiredoxin of Aquifex aeolicus (strain VF5).